Here is a 150-residue protein sequence, read N- to C-terminus: Transcriptional repressor NrdR (150 aa).

A zinc finger lies at 3–34 (CPFCNASDTKVVDTRASEDDKIVRRRRECISC). Positions 49–139 (LTVVKKDKNR…VYREFTDVKS (91 aa)) constitute an ATP-cone domain.

It belongs to the NrdR family. The cofactor is Zn(2+).

Negatively regulates transcription of bacterial ribonucleotide reductase nrd genes and operons by binding to NrdR-boxes. The sequence is that of Transcriptional repressor NrdR from Finegoldia magna (strain ATCC 29328 / DSM 20472 / WAL 2508) (Peptostreptococcus magnus).